A 121-amino-acid polypeptide reads, in one-letter code: Prismalin-14 (121 aa).

The first 16 residues, 1–16 (MRSLLVLLALAACASA), serve as a signal peptide directing secretion. Glutamine 17 is subject to Pyrrolidone carboxylic acid. A run of 4 repeats spans residues 48–51 (PIYR), 52–55 (PIYR), 56–59 (PIYY), and 60–63 (PQII). Positions 48 to 63 (PIYRPIYRPIYYPQII) are 4 X 4 AA approximate tandem repeats of P-I-Y-R.

As to expression, expressed only at the mantle edge where it is found predominantly in the inner side of the outer mantle fold.

Functionally, displays inhibitory activity against calcium carbonate precipitation, binds calcium and affects crystallization of calcium carbonate in vitro. May be involved in calcification of the prismatic layer of the shell. This Pinctada fucata (Akoya pearl oyster) protein is Prismalin-14.